The following is a 61-amino-acid chain: Keratin-associated protein 8-1 (61 aa).

An 11 X 2 AA repeats of G-[YCGS] region spans residues 13 to 49 (GCYWGSYGYPLGYSVGCGYGSTYSPVGYGLGYGYNGC).

This sequence belongs to the KRTAP type 8 family. In terms of assembly, interacts with hair keratins. In terms of tissue distribution, expression restricted exclusively to the cortical cells of hair follicles.

Functionally, in the hair cortex, hair keratin intermediate filaments are embedded in an interfilamentous matrix, consisting of hair keratin-associated proteins (KRTAP), which are essential for the formation of a rigid and resistant hair shaft through their extensive disulfide bond cross-linking with abundant cysteine residues of hair keratins. The matrix proteins include the high-sulfur and high-glycine-tyrosine keratins. The protein is Keratin-associated protein 8-1 (Krtap8-1) of Mus musculus (Mouse).